A 422-amino-acid chain; its full sequence is 3-phosphoshikimate 1-carboxyvinyltransferase (422 aa).

Residues K20, S21, and R25 each contribute to the 3-phosphoshikimate site. Position 20 (K20) interacts with phosphoenolpyruvate. Phosphoenolpyruvate-binding residues include G90 and R118. S163, S164, Q165, S191, D306, and K333 together coordinate 3-phosphoshikimate. Q165 is a phosphoenolpyruvate binding site. Residue D306 is the Proton acceptor of the active site. The phosphoenolpyruvate site is built by R337 and R378.

The protein belongs to the EPSP synthase family. As to quaternary structure, monomer.

The protein localises to the cytoplasm. The catalysed reaction is 3-phosphoshikimate + phosphoenolpyruvate = 5-O-(1-carboxyvinyl)-3-phosphoshikimate + phosphate. It participates in metabolic intermediate biosynthesis; chorismate biosynthesis. Catalyzes the transfer of the enolpyruvyl moiety of phosphoenolpyruvate (PEP) to the 5-hydroxyl of shikimate-3-phosphate (S3P) to produce enolpyruvyl shikimate-3-phosphate and inorganic phosphate. This is 3-phosphoshikimate 1-carboxyvinyltransferase from Methanocella arvoryzae (strain DSM 22066 / NBRC 105507 / MRE50).